Here is a 41-residue protein sequence, read N- to C-terminus: Large ribosomal subunit protein bL36 (41 aa).

It belongs to the bacterial ribosomal protein bL36 family.

This chain is Large ribosomal subunit protein bL36, found in Rhodopseudomonas palustris (strain HaA2).